A 285-amino-acid polypeptide reads, in one-letter code: Bifunctional protein FolD (285 aa).

Residues 165-167 (GRS) and S190 each bind NADP(+).

This sequence belongs to the tetrahydrofolate dehydrogenase/cyclohydrolase family. As to quaternary structure, homodimer.

It carries out the reaction (6R)-5,10-methylene-5,6,7,8-tetrahydrofolate + NADP(+) = (6R)-5,10-methenyltetrahydrofolate + NADPH. The catalysed reaction is (6R)-5,10-methenyltetrahydrofolate + H2O = (6R)-10-formyltetrahydrofolate + H(+). The protein operates within one-carbon metabolism; tetrahydrofolate interconversion. In terms of biological role, catalyzes the oxidation of 5,10-methylenetetrahydrofolate to 5,10-methenyltetrahydrofolate and then the hydrolysis of 5,10-methenyltetrahydrofolate to 10-formyltetrahydrofolate. In Streptococcus pneumoniae (strain ATCC BAA-255 / R6), this protein is Bifunctional protein FolD.